A 249-amino-acid polypeptide reads, in one-letter code: Gamma-glutamyl peptidase 3 (249 aa).

Residues Ser19 to Met217 enclose the Glutamine amidotransferase type-1 domain. The active-site Nucleophile is Cys103. Residues His196 and Glu198 contribute to the active site.

It belongs to the peptidase C26 family.

Its subcellular location is the cytoplasm. The protein localises to the cytosol. It carries out the reaction an S-[(1E)-1-(hydroxyimino)-omega-(methylsulfanyl)alkyl]-L-glutathione + H2O = an S-[(1E)-1-(hydroxyimino)-omega-(methylsulfanyl)alkyl]-L-cysteinylglycine + L-glutamate. It catalyses the reaction (E)-1-(glutathione-S-yl)-2-(1H-indol-3-yl)acetohydroximate + H2O = (E)-1-(glycyl-L-cystein-S-yl)-2-(1H-indol-3-yl)acetohydroximate + L-glutamate. The enzyme catalyses 2-(glutathion-S-yl)-2-(1H-indol-3-yl)acetonitrile + H2O = 2-(glycyl-L-cystein-S-yl)-2-(1H-indol-3-yl)acetonitrile + L-glutamate. The catalysed reaction is (Z)-1-(glutathione-S-yl)-2-phenylacetohydroximate + H2O = (Z)-1-(glycyl-L-cystein-S-yl)-2-phenylacetohydroximate + L-glutamate. It functions in the pathway secondary metabolite biosynthesis. Functionally, involved in glucosinolate biosynthesis. Hydrolyzes the gamma-glutamyl peptide bond of several glutathione (GSH) conjugates to produce Cys-Gly conjugates related to glucosinolates. The gamma-Glu-Cys-Gly-GSH conjugates are the sulfur-donating molecule in glucosinolate biosynthesis. Can use the GSH conjugate of the camalexin intermediate IAN (GS-IAN) as substrate. Required for the biosynthesis of camalexin, a pathogen-inducible phytoalexin with antibacterial and antifungal properties. The protein is Gamma-glutamyl peptidase 3 of Arabidopsis thaliana (Mouse-ear cress).